The sequence spans 365 residues: Phosphoserine aminotransferase (365 aa).

L-glutamate is bound at residue Arg42. Pyridoxal 5'-phosphate is bound by residues 76-77 (AR), Trp103, Thr154, Asp175, and Gln198. Lys199 is subject to N6-(pyridoxal phosphate)lysine. 242–243 (NT) contacts pyridoxal 5'-phosphate.

Belongs to the class-V pyridoxal-phosphate-dependent aminotransferase family. SerC subfamily. As to quaternary structure, homodimer. Pyridoxal 5'-phosphate is required as a cofactor.

The protein localises to the cytoplasm. It catalyses the reaction O-phospho-L-serine + 2-oxoglutarate = 3-phosphooxypyruvate + L-glutamate. The catalysed reaction is 4-(phosphooxy)-L-threonine + 2-oxoglutarate = (R)-3-hydroxy-2-oxo-4-phosphooxybutanoate + L-glutamate. The protein operates within amino-acid biosynthesis; L-serine biosynthesis; L-serine from 3-phospho-D-glycerate: step 2/3. Its pathway is cofactor biosynthesis; pyridoxine 5'-phosphate biosynthesis; pyridoxine 5'-phosphate from D-erythrose 4-phosphate: step 3/5. Functionally, catalyzes the reversible conversion of 3-phosphohydroxypyruvate to phosphoserine and of 3-hydroxy-2-oxo-4-phosphonooxybutanoate to phosphohydroxythreonine. The chain is Phosphoserine aminotransferase from Blochmanniella floridana.